We begin with the raw amino-acid sequence, 336 residues long: Ornithine carbamoyltransferase, catabolic (336 aa).

Carbamoyl phosphate is bound by residues 57-60 (STRT), Q84, R108, and 135-138 (HPTQ). L-ornithine is bound by residues N168, D232, and 236 to 237 (SM). Carbamoyl phosphate-binding positions include 274–275 (CL) and R321.

Belongs to the aspartate/ornithine carbamoyltransferase superfamily. OTCase family.

It localises to the cytoplasm. It catalyses the reaction carbamoyl phosphate + L-ornithine = L-citrulline + phosphate + H(+). Its pathway is amino-acid degradation; L-arginine degradation via ADI pathway; carbamoyl phosphate from L-arginine: step 2/2. Reversibly catalyzes the transfer of the carbamoyl group from carbamoyl phosphate (CP) to the N(epsilon) atom of ornithine (ORN) to produce L-citrulline. The polypeptide is Ornithine carbamoyltransferase, catabolic (arcB) (Pseudomonas putida (strain ATCC 47054 / DSM 6125 / CFBP 8728 / NCIMB 11950 / KT2440)).